The primary structure comprises 251 residues: Octanoyltransferase (251 aa).

Positions 49-230 (DEIPDQLLIL…ALDDALAGRL (182 aa)) constitute a BPL/LPL catalytic domain. Residues 87–94 (RGGRITWH), 160–162 (AIG), and 173–175 (GVA) contribute to the substrate site. The active-site Acyl-thioester intermediate is Cys-191.

It belongs to the LipB family.

The protein localises to the cytoplasm. It carries out the reaction octanoyl-[ACP] + L-lysyl-[protein] = N(6)-octanoyl-L-lysyl-[protein] + holo-[ACP] + H(+). The protein operates within protein modification; protein lipoylation via endogenous pathway; protein N(6)-(lipoyl)lysine from octanoyl-[acyl-carrier-protein]: step 1/2. Its function is as follows. Catalyzes the transfer of endogenously produced octanoic acid from octanoyl-acyl-carrier-protein onto the lipoyl domains of lipoate-dependent enzymes. Lipoyl-ACP can also act as a substrate although octanoyl-ACP is likely to be the physiological substrate. In Corynebacterium glutamicum (strain R), this protein is Octanoyltransferase.